Here is a 156-residue protein sequence, read N- to C-terminus: Small ribosomal subunit protein uS7 (156 aa).

The protein belongs to the universal ribosomal protein uS7 family. In terms of assembly, part of the 30S ribosomal subunit. Contacts proteins S9 and S11.

Functionally, one of the primary rRNA binding proteins, it binds directly to 16S rRNA where it nucleates assembly of the head domain of the 30S subunit. Is located at the subunit interface close to the decoding center, probably blocks exit of the E-site tRNA. This is Small ribosomal subunit protein uS7 from Chlorobaculum parvum (strain DSM 263 / NCIMB 8327) (Chlorobium vibrioforme subsp. thiosulfatophilum).